Consider the following 148-residue polypeptide: Deoxyuridine 5'-triphosphate nucleotidohydrolase (148 aa).

Residues 68–70 (RSG), Asn-81, 85–87 (TID), and Lys-95 each bind substrate.

This sequence belongs to the dUTPase family. Mg(2+) serves as cofactor.

The enzyme catalyses dUTP + H2O = dUMP + diphosphate + H(+). Its pathway is pyrimidine metabolism; dUMP biosynthesis; dUMP from dCTP (dUTP route): step 2/2. Its function is as follows. This enzyme is involved in nucleotide metabolism: it produces dUMP, the immediate precursor of thymidine nucleotides and it decreases the intracellular concentration of dUTP so that uracil cannot be incorporated into DNA. This is Deoxyuridine 5'-triphosphate nucleotidohydrolase from Rickettsia akari (strain Hartford).